The primary structure comprises 194 residues: Type II methyltransferase M.MjaVI (194 aa).

It belongs to the N(4)/N(6)-methyltransferase family. N(4) subfamily.

The enzyme catalyses a 2'-deoxycytidine in DNA + S-adenosyl-L-methionine = an N(4)-methyl-2'-deoxycytidine in DNA + S-adenosyl-L-homocysteine + H(+). Its function is as follows. A beta subtype methylase that recognizes the double-stranded sequence 5'-CCGG-3', methylates C-1 on both strands, and protects the DNA from cleavage by the MjaVI endonuclease. The polypeptide is Type II methyltransferase M.MjaVI (mjaVIM) (Methanocaldococcus jannaschii (strain ATCC 43067 / DSM 2661 / JAL-1 / JCM 10045 / NBRC 100440) (Methanococcus jannaschii)).